A 121-amino-acid chain; its full sequence is Large ribosomal subunit protein bL20 (121 aa).

Belongs to the bacterial ribosomal protein bL20 family.

Functionally, binds directly to 23S ribosomal RNA and is necessary for the in vitro assembly process of the 50S ribosomal subunit. It is not involved in the protein synthesizing functions of that subunit. This is Large ribosomal subunit protein bL20 from Chlamydia caviae (strain ATCC VR-813 / DSM 19441 / 03DC25 / GPIC) (Chlamydophila caviae).